The chain runs to 113 residues: Hydrogenase maturation factor HypA (113 aa).

Ni(2+) is bound at residue His-2. Residues Cys-73, Cys-76, Cys-89, and Cys-92 each coordinate Zn(2+).

Belongs to the HypA/HybF family.

Its function is as follows. Involved in the maturation of [NiFe] hydrogenases. Required for nickel insertion into the metal center of the hydrogenase. The sequence is that of Hydrogenase maturation factor HypA from Prosthecochloris aestuarii (strain DSM 271 / SK 413).